The chain runs to 370 residues: Cytochrome b (370 aa).

The next 4 membrane-spanning stretches (helical) occupy residues 25-45 (FGSM…FLAV), 69-90 (WMMQ…YIHI), 105-125 (WFSG…GYVL), and 170-190 (FFAL…LHIL). Residues His-75 and His-89 each coordinate heme b. Heme b contacts are provided by His-174 and His-188. His-193 serves as a coordination point for a ubiquinone. Transmembrane regions (helical) follow at residues 218–238 (YKDM…VSFF), 280–300 (LGGA…PFTH), 312–332 (FMQL…WTAT), and 339–358 (FTTI…ISNP).

Belongs to the cytochrome b family. In terms of assembly, the cytochrome bc1 complex contains 3 respiratory subunits (MT-CYB, CYC1 and UQCRFS1), 2 core proteins (UQCRC1 and UQCRC2) and probably 6 low-molecular weight proteins. Heme b serves as cofactor.

The protein resides in the mitochondrion inner membrane. Its function is as follows. Component of the ubiquinol-cytochrome c reductase complex (complex III or cytochrome b-c1 complex) that is part of the mitochondrial respiratory chain. The b-c1 complex mediates electron transfer from ubiquinol to cytochrome c. Contributes to the generation of a proton gradient across the mitochondrial membrane that is then used for ATP synthesis. This is Cytochrome b (MT-CYB) from Chilabothrus strigilatus mccraniei (Ragged Island boa constrictor).